A 397-amino-acid polypeptide reads, in one-letter code: UPF0761 membrane protein Kkor_1635 (397 aa).

6 helical membrane passes run 36–56 (MLALVPLMTVAVSLMAVFPSF), 92–112 (NLSAIGLGFLIVTSLLLMRSI), 132–152 (ILAYWAMLTMAPILIAASLAA), 168–188 (ILTFGLPFILIVLAFSALYMV), 201–221 (IAAVITAILFEAAKYGFAIFV), and 237–257 (IPIFFLWVYLSWSILLLGVIV).

Belongs to the UPF0761 family.

Its subcellular location is the cell inner membrane. This chain is UPF0761 membrane protein Kkor_1635, found in Kangiella koreensis (strain DSM 16069 / JCM 12317 / KCTC 12182 / SW-125).